The sequence spans 523 residues: Cytokinin dehydrogenase 3 (523 aa).

The first 31 residues, 1–31 (MASYNLRSQVRLIAITIVIIITLSTPITTNT), serve as a signal peptide directing secretion. The 178-residue stretch at 66–243 (TKIFPSAVLI…TRARIKLEVA (178 aa)) folds into the FAD-binding PCMH-type domain. Positions 100, 102, and 104 each coordinate FAD. Pros-8alpha-FAD histidine is present on histidine 105. 2 residues coordinate FAD: serine 106 and glutamine 110. N-linked (GlcNAc...) asparagine glycosylation is present at asparagine 153. FAD is bound by residues aspartate 167, threonine 172, serine 178, isoleucine 182, and isoleucine 233. N-linked (GlcNAc...) asparagine glycosylation is present at asparagine 408. Tyrosine 476, serine 511, and glutamine 514 together coordinate FAD.

This sequence belongs to the oxygen-dependent FAD-linked oxidoreductase family. FAD is required as a cofactor. As to expression, very weak expression in the young shoot tissues around two weeks after germination. Present in the center of the floral meristem and the boundary between long stamen primordia and gynoecial primordia.

The protein localises to the endoplasmic reticulum. It is found in the vacuole. The enzyme catalyses N(6)-dimethylallyladenine + A + H2O = 3-methyl-2-butenal + adenine + AH2. Catalyzes the oxidation of cytokinins, a family of N(6)-substituted adenine derivatives that are plant hormones, where the substituent is an isopentenyl group. Catalyzes in vitro the oxidation of various types of cytokinin nucleotides that are known as direct products of cytokinin biosynthesis. In association with CKX5 regulates the activity of the reproductive meristems, flower organ size and ovule formation. The protein is Cytokinin dehydrogenase 3 (CKX3) of Arabidopsis thaliana (Mouse-ear cress).